We begin with the raw amino-acid sequence, 1188 residues long: uncharacterized protein (1188 aa).

The next 3 membrane-spanning stretches (helical) occupy residues Phe-73 to Met-93, Ile-878 to Ile-898, and Val-1089 to Ile-1109.

The protein localises to the membrane. This is an uncharacterized protein from Saccharomyces cerevisiae (strain ATCC 204508 / S288c) (Baker's yeast).